The following is a 589-amino-acid chain: EZH inhibitory protein (589 aa).

Disordered regions lie at residues 1–46 (MASS…LRLR), 61–548 (AGED…SGPN), and 561–589 (LDSS…KCRG). 2 stretches are compositionally biased toward gly residues: residues 29 to 38 (GPRGRGGPSG) and 105 to 114 (PKGGGKADQG). A compositionally biased stretch (low complexity) spans 147 to 161 (GAAGPPLPGARGSPA). A compositionally biased stretch (polar residues) spans 193–204 (LRSSTSQGSGST). Composition is skewed to low complexity over residues 299-308 (RSSASAVSPE), 325-334 (RSSASVVSPE), 351-360 (RSSASVVSPE), and 374-390 (PRAT…TTRS). Phosphoserine is present on Ser306. Residues 426–437 (MRLDLQVDREPE) show a composition bias toward basic and acidic residues. The segment covering 438–449 (SEAEQEEQELES) has biased composition (acidic residues). The span at 450–465 (EPGPSSRPQASRSSSR) shows a compositional bias: low complexity. Residues 482 to 490 (RRPVRMRAS) are sufficient for interaction with EZH2. Positions 484–503 (PVRMRASSPSPPGRLYPLPK) are necessary and sufficient for inhibition of PRC2/EED-EZH1 and PRC2/EED-EZH2 complex activity. Over residues 509-547 (VHSPSSSSSESSSVSSSHSPLNKAPDPGSSPPLSSLSGP) the composition is skewed to low complexity. Basic and acidic residues predominate over residues 575–589 (AAPHTREEEDKKCRG).

As to quaternary structure, interacts with PRC2/EED-EZH1 complex member EZH1 and with PRC2/EED-EZH2 complex member EZH2; the interaction blocks EZH1/EZH2 methyltransferase activity. Interacts (via C-terminus) with SUZ12 which is a member of the PRC2/EED-EZH1 and PRC2/EED-EZH2 complexes. Highly expressed in ovary with lower expression in testis and very low levels in other tissues tested including prostate, brain, kidney, spleen and liver. During spermatogenesis, expressed mainly in spermatogonia with very low expression in spermatocytes I and II.

Its subcellular location is the nucleus. It localises to the cytoplasm. Inhibits PRC2/EED-EZH1 and PRC2/EED-EZH2 complex function by inhibiting EZH1/EZH2 methyltransferase activity, thereby causing down-regulation of histone H3 trimethylation at 'Lys-27' (H3K27me3). Probably inhibits methyltransferase activity by limiting the stimulatory effect of cofactors such as AEBP2 and JARID2. Inhibits H3K27me3 deposition during spermatogenesis and oogenesis. The protein is EZH inhibitory protein of Mus musculus (Mouse).